The chain runs to 220 residues: MASATDSRYGQKESSDQNFDYMFKILIIGNSSVGKTSFLFRYADDSFTPAFVSTVGIDFKVKTIYRNDKRIKLQIWDTAGQERYRTITTAYYRGAMGFILMYDITNEESFNAVQDWSTQIKTYSWDNAQVLLVGNKCDMEDERVVSSERGRQLADHLGFEFFEASAKDNINVKQTFERLVDVICEKMSESLDTADPAVTGAKQGPQLTDQQAPPHQDCAC.

11 residues coordinate GTP: Ser-31, Ser-32, Val-33, Gly-34, Lys-35, Thr-36, Ser-37, Thr-48, Pro-49, Ser-53, and Thr-54. Thr-36 is a binding site for Mg(2+). The Switch 1 motif lies at 49-58; it reads PAFVSTVGID. Mg(2+)-binding residues include Thr-54 and Asp-77. Gly-80 provides a ligand contact to GTP. Residues 80–96 carry the Switch 2 motif; that stretch reads GQERYRTITTAYYRGAM. Residue Thr-86 is modified to Phosphothreonine. Residues Asn-135, Lys-136, Asp-138, Ala-166, and Lys-167 each coordinate GTP. Phosphoserine occurs at positions 188 and 190. The segment at 194–220 is disordered; it reads ADPAVTGAKQGPQLTDQQAPPHQDCAC. S-geranylgeranyl cysteine attachment occurs at residues Cys-218 and Cys-220. Cys-220 carries the post-translational modification Cysteine methyl ester.

It belongs to the small GTPase superfamily. Rab family. Interacts with RIMS1 and RIMS2. Interacts with Rabphilin-3A/RPH3A and Rab effector Noc2/RPH3AL. Interacts with SYTL4. Interacts with RAB3IP. Interacts with SGSM1 and SGSM3. Interacts with SYT1. Interacts with MYH9; this interaction is essential for lysosome exocytosis and plasma membrane repair. Interacts with STXBP1; this interaction promotes RAB3A dissociation from the vesicle membrane. Interacts with SNCA. Interacts with GDI1, GDI2, CHM and CHML; phosphorylation at Thr-86 disrupts these interactions. Interacts with MADD (via uDENN domain); the GTP-bound form is preferred for interaction. Mg(2+) serves as cofactor. Phosphorylation of Thr-86 in the switch II region by LRRK2 prevents the association of RAB regulatory proteins, including CHM, CHML and RAB GDP dissociation inhibitors GDI1 and GDI2.

It localises to the cytoplasm. Its subcellular location is the cytosol. It is found in the lysosome. The protein resides in the cytoplasmic vesicle. The protein localises to the secretory vesicle. It localises to the cell projection. Its subcellular location is the axon. It is found in the cell membrane. The protein resides in the presynapse. The protein localises to the postsynapse. It catalyses the reaction GTP + H2O = GDP + phosphate + H(+). Regulated by guanine nucleotide exchange factors (GEFs) including RAB3IL1 and MADD which promote the exchange of bound GDP for free GTP. Regulated by GTPase activating proteins (GAPs) including RAB3GAP1 and TBC1D10B which increase the GTP hydrolysis activity. Inhibited by GDP dissociation inhibitors (GDIs) which prevent Rab-GDP dissociation. The small GTPases Rab are key regulators of intracellular membrane trafficking, from the formation of transport vesicles to their fusion with membranes. Rabs cycle between an inactive GDP-bound form and an active GTP-bound form that is able to recruit to membranes different sets of downstream effectors directly responsible for vesicle formation, movement, tethering and fusion. RAB3A plays a central role in regulated exocytosis and secretion. Controls the recruitment, tethering and docking of secretory vesicles to the plasma membrane. Upon stimulation, switches to its active GTP-bound form, cycles to vesicles and recruits effectors such as RIMS1, RIMS2, Rabphilin-3A/RPH3A, RPH3AL or SYTL4 to help the docking of vesicules onto the plasma membrane. Upon GTP hydrolysis by GTPase-activating protein, dissociates from the vesicle membrane allowing the exocytosis to proceed. Stimulates insulin secretion through interaction with RIMS2 or RPH3AL effectors in pancreatic beta cells. Regulates calcium-dependent lysosome exocytosis and plasma membrane repair (PMR) via the interaction with 2 effectors, SYTL4 and myosin-9/MYH9. Acts as a positive regulator of acrosome content secretion in sperm cells by interacting with RIMS1. Also plays a role in the regulation of dopamine release by interacting with synaptotagmin I/SYT. The chain is Ras-related protein Rab-3A (RAB3A) from Sus scrofa (Pig).